Reading from the N-terminus, the 723-residue chain is 1,3-beta-galactosyl-N-acetylhexosamine phosphorylase Cphy0577 (723 aa).

Asp317 acts as the Proton donor in catalysis.

The protein belongs to the glycoside hydrolase 112 family.

It catalyses the reaction beta-D-galactosyl-(1-&gt;3)-N-acetyl-D-glucosamine + phosphate = alpha-D-galactose 1-phosphate + N-acetyl-D-glucosamine. In terms of biological role, reversibly phosphorolyzes beta-D-galactopyranosyl-(1-&gt;3)-N-acetyl-D-glucosamine to form alpha-D-galactopyranose 1-phosphate and acetyl-D-glucosamine. Active towards galacto-N-biose and lacto-N-biose. Does not phosphorolyze galacto-N-tetraose or lacto-N-tetraose. In the reverse reaction has activity toward N-acetyl-D-glucosamine and N-acetyl-D-galactosamine, but not L-rhamnose, D-glucose or D-galactose. The protein is 1,3-beta-galactosyl-N-acetylhexosamine phosphorylase Cphy0577 of Lachnoclostridium phytofermentans (strain ATCC 700394 / DSM 18823 / ISDg) (Clostridium phytofermentans).